An 86-amino-acid polypeptide reads, in one-letter code: U15-lycotoxin-Ls1a (86 aa).

A signal peptide spans 1–20 (MNSKIFAVLFLLAFLSCVLS). Residues 21-66 (DQYCPKSSITACKKMNIRNDCCKDDDCTGGSWCCATPCGNFCKYPT) enclose the WAP domain. 5 cysteine pairs are disulfide-bonded: cysteine 24–cysteine 54, cysteine 32–cysteine 58, cysteine 41–cysteine 53, cysteine 42–cysteine 80, and cysteine 47–cysteine 62.

This sequence belongs to the venom protein 11 family. 01 (wap-1) subfamily. In terms of processing, contains 5 disulfide bonds. In terms of tissue distribution, expressed by the venom gland.

The protein resides in the secreted. Its function is as follows. Has antibacterial activity. The sequence is that of U15-lycotoxin-Ls1a from Lycosa singoriensis (Wolf spider).